The following is a 369-amino-acid chain: Trans-enoyl reductase pyiC (369 aa).

Residue 52–55 (CDYK) coordinates NADP(+). 137–144 (TGIGTLGM) serves as a coordination point for substrate. NADP(+)-binding positions include 195–198 (SPKN), tyrosine 213, and 260–261 (LE). Substrate is bound at residue 280 to 284 (GPLLL). 349 to 350 (VS) contributes to the NADP(+) binding site.

This sequence belongs to the zinc-containing alcohol dehydrogenase family. In terms of assembly, monomer.

The protein operates within mycotoxin biosynthesis. Functionally, trans-enoyl reductase; part of the gene cluster that mediates the biosynthesis of the mycotoxin pyrichalasin H, a tyrosine-derived cytochalasan that inhibits the growth of rice seedlings, but also inhibits lymphocyte capping and actin polymerization and alters cell morphology. Pyrichalasin H is indicated as the responsible agent for the genus-specific pathogenicity of M.grisea toward crabgrass. The first step in the pathway is catalyzed by the O-methyltransferase pyiA which methylates free tyrosine to generate the precursor O-methyltyrosine. The hybrid PKS-NRPS pyiS, assisted by the enoyl reductase pyiC, are responsible for fusion of the O-methyltyrosine precursor and the polyketide backbone. The polyketide synthase module (PKS) of pyiS is responsible for the synthesis of the polyketide backbone and the downstream nonribosomal peptide synthetase (NRPS) amidates the carboxyl end of the polyketide with the O-methyltyrosine precursor. As the NRPS A-domain demonstrates substrate tolerance, pyiS can also use phenylalanine, tyrosine and even para-chlorophenylalanine as amino acid precursor, which leads to the production of novel cytochalasans, including halogenated cytochalasans. Because pyiS lacks a designated enoylreductase (ER) domain, the required activity is provided the enoyl reductase pyiC. Reduction by the hydrolyase pyiE, followed by dehydration and intra-molecular Diels-Alder cyclization by the Diels-Alderase pyiF then yield the required isoindolone-fused macrocycle. The tailoring cytochrome P450 monooxygenases piyD and piyG catalyze the hydroxylation at C-18 and C-7, respectivily, whereas the short-chain dehydrogenase/reductase pyiH reduces the carbonyl at C-21 in preparation for the transfer of an acetyl group by the acetyltransferase pyiB. These 3 reactions whose order is not clear yet, lead to the production of O-methylpyrichalasin J, a deacetylated pyrichalasin H. Finally, pyiB to converts O-methylpyrichalasin J into the final product pyrichalasin H via acetylation of C-21. The sequence is that of Trans-enoyl reductase pyiC from Pyricularia grisea (Crabgrass-specific blast fungus).